Reading from the N-terminus, the 142-residue chain is Probable pilin MJ0832.1 (142 aa).

A propeptide spanning residues 1–8 (MLKFRKRG) is cleaved from the precursor. Positions 9 to 17 (QISLEFSLL) match the QXSXEXXXL motif.

The N-terminus is cleaved by the prepilin peptidase EppA, which recognizes the class III signal sequence.

The protein resides in the secreted. Its subcellular location is the cell surface. It is found in the fimbrium. The polypeptide is Probable pilin MJ0832.1 (Methanocaldococcus jannaschii (strain ATCC 43067 / DSM 2661 / JAL-1 / JCM 10045 / NBRC 100440) (Methanococcus jannaschii)).